The following is a 72-amino-acid chain: Cell division protein ZapB (72 aa).

Positions 1-72 (MSLEILDQLE…RSLLGKIDNV (72 aa)) form a coiled coil. The interval 33–57 (KNNQSQQANDALRSENEQLKSEHQN) is disordered. Over residues 44–57 (LRSENEQLKSEHQN) the composition is skewed to basic and acidic residues.

The protein belongs to the ZapB family. In terms of assembly, homodimer. The ends of the coiled-coil dimer bind to each other, forming polymers. Interacts with FtsZ.

It localises to the cytoplasm. In terms of biological role, non-essential, abundant cell division factor that is required for proper Z-ring formation. It is recruited early to the divisome by direct interaction with FtsZ, stimulating Z-ring assembly and thereby promoting cell division earlier in the cell cycle. Its recruitment to the Z-ring requires functional FtsA or ZipA. This chain is Cell division protein ZapB, found in Pasteurella multocida (strain Pm70).